Here is a 94-residue protein sequence, read N- to C-terminus: Defensin-like protein 21 (94 aa).

An N-terminal signal peptide occupies residues 1–26 (MVRTNVVSFVLFAAIVLCIGSIQIDG). 4 disulfide bridges follow: Cys41–Cys92, Cys51–Cys79, Cys65–Cys88, and Cys69–Cys90.

This sequence belongs to the DEFL family.

The protein localises to the secreted. The chain is Defensin-like protein 21 from Arabidopsis thaliana (Mouse-ear cress).